Here is a 467-residue protein sequence, read N- to C-terminus: UDP-N-acetylmuramate--L-alanine ligase (467 aa).

112–118 (GTHGKTT) contributes to the ATP binding site.

It belongs to the MurCDEF family.

The protein localises to the cytoplasm. The catalysed reaction is UDP-N-acetyl-alpha-D-muramate + L-alanine + ATP = UDP-N-acetyl-alpha-D-muramoyl-L-alanine + ADP + phosphate + H(+). The protein operates within cell wall biogenesis; peptidoglycan biosynthesis. Functionally, cell wall formation. The polypeptide is UDP-N-acetylmuramate--L-alanine ligase (Paraburkholderia phytofirmans (strain DSM 17436 / LMG 22146 / PsJN) (Burkholderia phytofirmans)).